A 434-amino-acid chain; its full sequence is Beta-enolase (434 aa).

Ala2 carries the N-acetylalanine modification. Thr72 is modified (phosphothreonine). 2 positions are modified to phosphoserine: Ser83 and Ser157. Residues His158 and Glu167 each coordinate substrate. Ser176 bears the Phosphoserine mark. Phosphothreonine is present on Thr205. Catalysis depends on Glu210, which acts as the Proton donor. Thr229 is modified (phosphothreonine). Phosphotyrosine is present on Tyr236. Asp245 serves as a coordination point for Mg(2+). A Phosphoserine modification is found at Ser263. Glu293 and Asp318 together coordinate substrate. Residues Glu293 and Asp318 each coordinate Mg(2+). Residue Lys343 is the Proton acceptor of the active site. Substrate contacts are provided by residues 370–373 and Lys394; that span reads SHRS.

It belongs to the enolase family. Mammalian enolase is composed of 3 isozyme subunits, alpha, beta and gamma, which can form homodimers or heterodimers which are cell-type and development-specific. In vitro, interacts with several glycolytic enzymes including PKM, PGM, CKM and ALDO. Also binds PLG and troponin, in vitro. Interacts with PNKD. It depends on Mg(2+) as a cofactor. As to expression, brain (at protein level). The alpha/alpha homodimer is expressed in embryo and in most adult tissues. The alpha/beta heterodimer and the beta/beta homodimer are found in striated muscle, and the alpha/gamma heterodimer and the gamma/gamma homodimer in neurons. In striated muscle, the fiber-type order of ENO3 expression is IIB &gt; IIX &gt; IIA &gt; I.

The protein localises to the cytoplasm. The enzyme catalyses (2R)-2-phosphoglycerate = phosphoenolpyruvate + H2O. It functions in the pathway carbohydrate degradation; glycolysis; pyruvate from D-glyceraldehyde 3-phosphate: step 4/5. In terms of biological role, glycolytic enzyme that catalyzes the conversion of 2-phosphoglycerate to phosphoenolpyruvate. Appears to have a function in striated muscle development and regeneration. In Mus musculus (Mouse), this protein is Beta-enolase (Eno3).